Reading from the N-terminus, the 149-residue chain is 3-dehydroquinate dehydratase (149 aa).

Y26 serves as the catalytic Proton acceptor. 3 residues coordinate substrate: N78, H84, and D91. H104 functions as the Proton donor in the catalytic mechanism. Substrate is bound by residues 105 to 106 (LS) and R115.

The protein belongs to the type-II 3-dehydroquinase family. In terms of assembly, homododecamer.

It carries out the reaction 3-dehydroquinate = 3-dehydroshikimate + H2O. It participates in metabolic intermediate biosynthesis; chorismate biosynthesis; chorismate from D-erythrose 4-phosphate and phosphoenolpyruvate: step 3/7. Its function is as follows. Catalyzes a trans-dehydration via an enolate intermediate. The sequence is that of 3-dehydroquinate dehydratase from Polynucleobacter necessarius subsp. necessarius (strain STIR1).